We begin with the raw amino-acid sequence, 239 residues long: uncharacterized protein (239 aa).

3 helical membrane-spanning segments follow: residues 125-144 (LAIISFICSPSLSFFLLILY), 149-171 (IFVLFKLFAVEYVRYELVYFLFL), and 197-216 (SVLNLSVSVTILAVLQGILF).

Its subcellular location is the cell membrane. This is an uncharacterized protein from Aquifex aeolicus (strain VF5).